Here is a 124-residue protein sequence, read N- to C-terminus: Small ribosomal subunit protein uS12 (124 aa).

Position 89 is a 3-methylthioaspartic acid (Asp89).

The protein belongs to the universal ribosomal protein uS12 family. Part of the 30S ribosomal subunit. Contacts proteins S8 and S17. May interact with IF1 in the 30S initiation complex.

Functionally, with S4 and S5 plays an important role in translational accuracy. In terms of biological role, interacts with and stabilizes bases of the 16S rRNA that are involved in tRNA selection in the A site and with the mRNA backbone. Located at the interface of the 30S and 50S subunits, it traverses the body of the 30S subunit contacting proteins on the other side and probably holding the rRNA structure together. The combined cluster of proteins S8, S12 and S17 appears to hold together the shoulder and platform of the 30S subunit. This chain is Small ribosomal subunit protein uS12, found in Pasteurella multocida (strain Pm70).